A 532-amino-acid chain; its full sequence is Probable NAD kinase 1 (532 aa).

Over residues M1 to E26 the composition is skewed to basic and acidic residues. Residues M1–I32 form a disordered region.

Belongs to the NAD kinase family.

It catalyses the reaction NAD(+) + ATP = ADP + NADP(+) + H(+). This chain is Probable NAD kinase 1, found in Oryza sativa subsp. japonica (Rice).